We begin with the raw amino-acid sequence, 257 residues long: Large ribosomal subunit protein uL2 (257 aa).

The segment at 207 to 257 is disordered; sequence VDHPHGGGNHQHVGHPTTLKRSSPPGQKAGKVAARRTGLIRGGNKEGAADN.

Belongs to the universal ribosomal protein uL2 family. As to quaternary structure, component of the large ribosomal subunit.

It localises to the cytoplasm. Functionally, component of the large ribosomal subunit. The ribosome is a large ribonucleoprotein complex responsible for the synthesis of proteins in the cell. The sequence is that of Large ribosomal subunit protein uL2 (RPL8) from Entamoeba histolytica (strain ATCC 30459 / HM-1:IMSS / ABRM).